We begin with the raw amino-acid sequence, 1008 residues long: Probable pre-mRNA-splicing factor ATP-dependent RNA helicase mog-4 (1008 aa).

Disordered regions lie at residues 104 to 146 and 169 to 202; these read SSTK…SESD and NKKE…REES. The segment covering 127–137 has biased composition (low complexity); sequence KASKPGKSVKP. Residues 374–538 enclose the Helicase ATP-binding domain; that stretch reads IEAVKEHQVL…FDDAPIFRIP (165 aa). 387–394 provides a ligand contact to ATP; sequence GETGSGKT. Residues 485–488 carry the DEAH box motif; it reads DEAH. One can recognise a Helicase C-terminal domain in the interval 563–737; it reads TIMQIHLTQP…NVVLMLKSLG (175 aa). The segment at 988–1008 is disordered; sequence EDATNKKMPKNKGKSGKDLER.

Belongs to the DEAD box helicase family. DEAH subfamily. DDX16/PRP8 sub-subfamily. In terms of assembly, interacts with mep-1 and smn-1.

The protein resides in the nucleus. The catalysed reaction is ATP + H2O = ADP + phosphate + H(+). Its function is as follows. ATP-binding RNA helicase involved in pre-mRNA splicing. Operates during embryogenesis. The polypeptide is Probable pre-mRNA-splicing factor ATP-dependent RNA helicase mog-4 (mog-4) (Caenorhabditis elegans).